A 200-amino-acid polypeptide reads, in one-letter code: 3-isopropylmalate dehydratase small subunit (200 aa).

The protein belongs to the LeuD family. LeuD type 1 subfamily. Heterodimer of LeuC and LeuD.

The catalysed reaction is (2R,3S)-3-isopropylmalate = (2S)-2-isopropylmalate. The protein operates within amino-acid biosynthesis; L-leucine biosynthesis; L-leucine from 3-methyl-2-oxobutanoate: step 2/4. Catalyzes the isomerization between 2-isopropylmalate and 3-isopropylmalate, via the formation of 2-isopropylmaleate. The protein is 3-isopropylmalate dehydratase small subunit of Vibrio vulnificus (strain YJ016).